Reading from the N-terminus, the 60-residue chain is Protein translocase subunit SecE (60 aa).

The helical transmembrane segment at 31-51 threads the bilayer; sequence IIVVSTVIFFLVFFYALDIGI.

The protein belongs to the SecE/SEC61-gamma family. In terms of assembly, component of the Sec protein translocase complex. Heterotrimer consisting of SecY, SecE and SecG subunits. The heterotrimers can form oligomers, although 1 heterotrimer is thought to be able to translocate proteins. Interacts with the ribosome. Interacts with SecDF, and other proteins may be involved. Interacts with SecA.

The protein localises to the cell membrane. Its function is as follows. Essential subunit of the Sec protein translocation channel SecYEG. Clamps together the 2 halves of SecY. May contact the channel plug during translocation. The sequence is that of Protein translocase subunit SecE from Staphylococcus epidermidis (strain ATCC 35984 / DSM 28319 / BCRC 17069 / CCUG 31568 / BM 3577 / RP62A).